The chain runs to 431 residues: Polygalacturonase ADPG1 (431 aa).

The N-terminal stretch at 1-23 is a signal peptide; sequence MARCCRHLAVFLCVLLMLSLCKA. 2 PbH1 repeats span residues 223-249 and 250-271; these read CNKVEVSNVEITAPGDSPNTDGIHITN and TQNIRVSNSDIGTGDDCISIED. The active-site Proton donor is aspartate 264. Histidine 287 is an active-site residue. 3 PbH1 repeats span residues 303 to 324, 332 to 353, and 398 to 420; these read VSGINVDGAKFSESDNGVRIKT, AKNIKFQNIRMENVKNPIIIDQ, and CQGIVLENVKIKGGTASCKNANV.

This sequence belongs to the glycosyl hydrolase 28 family. Expressed in flower buds and siliques, in the dehiscence zone of anthers (stomium cells) and maturing siliques. Expressed in stigma during pollen tube growth. Not expressed in seeds or in the floral part or leaf abscission zone but found at the junction between the seed and the funiculus at the site of seed abscission.

It is found in the secreted. Its subcellular location is the cell wall. The protein resides in the cytoplasm. It catalyses the reaction (1,4-alpha-D-galacturonosyl)n+m + H2O = (1,4-alpha-D-galacturonosyl)n + (1,4-alpha-D-galacturonosyl)m.. Polygalacturonase involved in cell separation in the final stages of pod shatter and in anther dehiscence. Not involved in floral organ abscission. This chain is Polygalacturonase ADPG1 (ADPG1), found in Arabidopsis thaliana (Mouse-ear cress).